The chain runs to 371 residues: S-adenosylmethionine:tRNA ribosyltransferase-isomerase (371 aa).

This sequence belongs to the QueA family. Monomer.

Its subcellular location is the cytoplasm. The enzyme catalyses 7-aminomethyl-7-carbaguanosine(34) in tRNA + S-adenosyl-L-methionine = epoxyqueuosine(34) in tRNA + adenine + L-methionine + 2 H(+). It functions in the pathway tRNA modification; tRNA-queuosine biosynthesis. Functionally, transfers and isomerizes the ribose moiety from AdoMet to the 7-aminomethyl group of 7-deazaguanine (preQ1-tRNA) to give epoxyqueuosine (oQ-tRNA). The chain is S-adenosylmethionine:tRNA ribosyltransferase-isomerase from Nitratidesulfovibrio vulgaris (strain ATCC 29579 / DSM 644 / CCUG 34227 / NCIMB 8303 / VKM B-1760 / Hildenborough) (Desulfovibrio vulgaris).